Here is a 689-residue protein sequence, read N- to C-terminus: Acyl-coenzyme A oxidase 1 (689 aa).

FAD is bound by residues Thr149 and Gly188. The active-site Proton acceptor is the Glu444.

The protein belongs to the acyl-CoA oxidase family. In terms of assembly, heteropentamer composed of five different subunits. FAD serves as cofactor.

The protein resides in the peroxisome. It carries out the reaction a 2,3-saturated acyl-CoA + O2 = a (2E)-enoyl-CoA + H2O2. It functions in the pathway lipid metabolism; peroxisomal fatty acid beta-oxidation. The chain is Acyl-coenzyme A oxidase 1 (POX1) from Yarrowia lipolytica (strain CLIB 122 / E 150) (Yeast).